Consider the following 679-residue polypeptide: UvrABC system protein B (679 aa).

The Helicase ATP-binding domain occupies 25-412 (EGVNQGQRYQ…DGHLAEQVIR (388 aa)). Residue 38–45 (GATGTGKT) coordinates ATP. The Beta-hairpin motif lies at 91-114 (YYDYYQPEAYVPVSDTYIAKTSSI). Residues 429–591 (QVDDLLAEIR…IVPRPAGKRA (163 aa)) enclose the Helicase C-terminal domain. The 36-residue stretch at 639-674 (PELIDQLETKMKEAAKNLNFEEAASLRDRIKKFRQK) folds into the UVR domain.

The protein belongs to the UvrB family. In terms of assembly, forms a heterotetramer with UvrA during the search for lesions. Interacts with UvrC in an incision complex.

It localises to the cytoplasm. Its function is as follows. The UvrABC repair system catalyzes the recognition and processing of DNA lesions. A damage recognition complex composed of 2 UvrA and 2 UvrB subunits scans DNA for abnormalities. Upon binding of the UvrA(2)B(2) complex to a putative damaged site, the DNA wraps around one UvrB monomer. DNA wrap is dependent on ATP binding by UvrB and probably causes local melting of the DNA helix, facilitating insertion of UvrB beta-hairpin between the DNA strands. Then UvrB probes one DNA strand for the presence of a lesion. If a lesion is found the UvrA subunits dissociate and the UvrB-DNA preincision complex is formed. This complex is subsequently bound by UvrC and the second UvrB is released. If no lesion is found, the DNA wraps around the other UvrB subunit that will check the other stand for damage. The polypeptide is UvrABC system protein B (Prochlorococcus marinus (strain MIT 9313)).